Here is a 112-residue protein sequence, read N- to C-terminus: Large ribosomal subunit protein eL30 (112 aa).

Belongs to the eukaryotic ribosomal protein eL30 family. In terms of tissue distribution, expressed in roots and leaves.

The sequence is that of Large ribosomal subunit protein eL30 from Triticum aestivum (Wheat).